A 618-amino-acid polypeptide reads, in one-letter code: UvrABC system protein C (618 aa).

A GIY-YIG domain is found at D13–I92. The region spanning L204–I239 is the UVR domain.

Belongs to the UvrC family. As to quaternary structure, interacts with UvrB in an incision complex.

The protein localises to the cytoplasm. Its function is as follows. The UvrABC repair system catalyzes the recognition and processing of DNA lesions. UvrC both incises the 5' and 3' sides of the lesion. The N-terminal half is responsible for the 3' incision and the C-terminal half is responsible for the 5' incision. This chain is UvrABC system protein C, found in Clostridium botulinum (strain Okra / Type B1).